An 89-amino-acid polypeptide reads, in one-letter code: Small ribosomal subunit protein uS14 (89 aa).

The protein belongs to the universal ribosomal protein uS14 family. Part of the 30S ribosomal subunit. Contacts proteins S3 and S10.

Functionally, binds 16S rRNA, required for the assembly of 30S particles and may also be responsible for determining the conformation of the 16S rRNA at the A site. This Lacticaseibacillus casei (strain BL23) (Lactobacillus casei) protein is Small ribosomal subunit protein uS14.